The following is a 638-amino-acid chain: LIM domain kinase 2 (638 aa).

LIM zinc-binding domains lie at 12–63 (CRGC…CHKD) and 72–124 (CHGC…CGKC). Residues 152-239 (LISMPATTEC…TLQLLIEHDP (88 aa)) enclose the PDZ domain. T210 carries the post-translational modification Phosphothreonine. The interval 255-304 (PHMQSTGHTLMLSTLDTKENQEGTLRRRSLRRSNSISKSPGPSSPKEPLL) is disordered. Over residues 257–269 (MQSTGHTLMLSTL) the composition is skewed to polar residues. Residues 270 to 279 (DTKENQEGTL) are compositionally biased toward basic and acidic residues. Positions 286–304 (RSNSISKSPGPSSPKEPLL) are enriched in low complexity. 2 positions are modified to phosphoserine: S293 and S298. The region spanning 331–608 (LIHGEVLGKG…DSFEALSLFL (278 aa)) is the Protein kinase domain. Residues 337 to 345 (LGKGFFGQA) and K360 contribute to the ATP site. D451 is a catalytic residue. T505 bears the Phosphothreonine; by ROCK1 and CDC42BP mark.

Belongs to the protein kinase superfamily. TKL Ser/Thr protein kinase family. As to quaternary structure, binds ROCK1 and MARF1. Interacts with NISCH. In terms of processing, phosphorylated on serine and/or threonine residues by ROCK1. In terms of tissue distribution, specifically expressed in the testes.

It localises to the cytoplasm. It is found in the cytoskeleton. The protein localises to the spindle. Its subcellular location is the microtubule organizing center. The protein resides in the centrosome. It localises to the nucleus. It is found in the perinuclear region. It carries out the reaction L-seryl-[protein] + ATP = O-phospho-L-seryl-[protein] + ADP + H(+). It catalyses the reaction L-threonyl-[protein] + ATP = O-phospho-L-threonyl-[protein] + ADP + H(+). Functionally, serine/threonine-protein kinase that plays an essential role in the regulation of actin filament dynamics. Acts downstream of several Rho family GTPase signal transduction pathways. Involved in astral microtubule organization and mitotic spindle orientation during early stages of mitosis by mediating phosphorylation of TPPP. Displays serine/threonine-specific phosphorylation of myelin basic protein and histone (MBP) in vitro. Suppresses ciliogenesis via multiple pathways; phosphorylation of CFL1, suppression of directional trafficking of ciliary vesicles to the ciliary base, and by facilitating YAP1 nuclear localization where it acts as a transcriptional corepressor of the TEAD4 target genes AURKA and PLK1. The sequence is that of LIM domain kinase 2 (Limk2) from Mus musculus (Mouse).